Consider the following 311-residue polypeptide: Small ribosomal subunit biogenesis GTPase RsgA (311 aa).

The CP-type G domain occupies 77–239 (LSKQSHIIAT…IIDTPGIKGF (163 aa)). Residues 126–129 (NKTD) and 180–188 (GHSGVGKST) each bind GTP. Residues Cys263, Cys268, His270, and Cys276 each coordinate Zn(2+).

It belongs to the TRAFAC class YlqF/YawG GTPase family. RsgA subfamily. As to quaternary structure, monomer. Associates with 30S ribosomal subunit, binds 16S rRNA. The cofactor is Zn(2+).

Its subcellular location is the cytoplasm. One of several proteins that assist in the late maturation steps of the functional core of the 30S ribosomal subunit. Helps release RbfA from mature subunits. May play a role in the assembly of ribosomal proteins into the subunit. Circularly permuted GTPase that catalyzes slow GTP hydrolysis, GTPase activity is stimulated by the 30S ribosomal subunit. This Azobacteroides pseudotrichonymphae genomovar. CFP2 protein is Small ribosomal subunit biogenesis GTPase RsgA.